The primary structure comprises 99 residues: Co-chaperonin GroES (99 aa).

This sequence belongs to the GroES chaperonin family. Heptamer of 7 subunits arranged in a ring. Interacts with the chaperonin GroEL.

The protein localises to the cytoplasm. Functionally, together with the chaperonin GroEL, plays an essential role in assisting protein folding. The GroEL-GroES system forms a nano-cage that allows encapsulation of the non-native substrate proteins and provides a physical environment optimized to promote and accelerate protein folding. GroES binds to the apical surface of the GroEL ring, thereby capping the opening of the GroEL channel. The polypeptide is Co-chaperonin GroES (Corynebacterium kroppenstedtii (strain DSM 44385 / JCM 11950 / CIP 105744 / CCUG 35717)).